Here is a 786-residue protein sequence, read N- to C-terminus: Endonuclease MutS2 (786 aa).

An ATP-binding site is contributed by 332-339 (GPNTGGKT). Residues 710–785 (VDLRGLDAEE…GDGVTMVELK (76 aa)) enclose the Smr domain.

The protein belongs to the DNA mismatch repair MutS family. MutS2 subfamily. Homodimer. Binds to stalled ribosomes, contacting rRNA.

In terms of biological role, endonuclease that is involved in the suppression of homologous recombination and thus may have a key role in the control of bacterial genetic diversity. Acts as a ribosome collision sensor, splitting the ribosome into its 2 subunits. Detects stalled/collided 70S ribosomes which it binds and splits by an ATP-hydrolysis driven conformational change. Acts upstream of the ribosome quality control system (RQC), a ribosome-associated complex that mediates the extraction of incompletely synthesized nascent chains from stalled ribosomes and their subsequent degradation. Probably generates substrates for RQC. The chain is Endonuclease MutS2 from Clostridium beijerinckii (strain ATCC 51743 / NCIMB 8052) (Clostridium acetobutylicum).